The sequence spans 786 residues: DNA repair and recombination protein RAD54-like (786 aa).

The segment at 2–9 (RRSLAPSQ) is required for chromatin remodeling, strand pairing activities and coupling of ATPase activity. Thr22 is subject to Phosphothreonine. Residues 165–340 (EGKRGNFNGC…FSLVNFVNPE (176 aa)) enclose the Helicase ATP-binding domain. 178–185 (DEMGLGKT) contributes to the ATP binding site. Residues 291 to 294 (DEGH) carry the DEGH box motif. Residues 497-654 (LLDFMLAAIR…NNDSAEKHFT (158 aa)) form the Helicase C-terminal domain. The interval 740–786 (KQPTCITEDNHSEQPQLNSKRNANSVLENDDDEDFDPNSSDEKFLGF) is disordered. The segment covering 752–766 (EQPQLNSKRNANSVL) has biased composition (polar residues).

It belongs to the SNF2/RAD54 helicase family. Interacts (via N-terminus) with spn-A/Rad51.

Its subcellular location is the nucleus. In terms of biological role, involved in mitotic DNA repair and meiotic recombination. Functions in the recombinational DNA repair pathway. Essential for interhomolog gene conversion (GC), but may have a less important role in intersister GC than spn-A/Rad51. In the presence of DNA, spn-A/Rad51 enhances the ATPase activity of okr/Rad54. The protein is DNA repair and recombination protein RAD54-like of Drosophila virilis (Fruit fly).